A 320-amino-acid chain; its full sequence is uncharacterized protein (320 aa).

This is an uncharacterized protein from Bacillus subtilis (strain 168).